Reading from the N-terminus, the 227-residue chain is Thymidylate synthase (227 aa).

Residue 89-90 coordinates dUMP; that stretch reads RR. Cys-109 serves as the catalytic Nucleophile. Residues 129-132, Asn-140, and 170-172 each bind dUMP; these read RSND and HVY. A (6R)-5,10-methylene-5,6,7,8-tetrahydrofolate-binding site is contributed by Asp-132.

This sequence belongs to the thymidylate synthase family. Bacterial-type ThyA subfamily. In terms of assembly, homodimer.

It is found in the cytoplasm. The catalysed reaction is dUMP + (6R)-5,10-methylene-5,6,7,8-tetrahydrofolate = 7,8-dihydrofolate + dTMP. Its pathway is pyrimidine metabolism; dTTP biosynthesis. Its function is as follows. Catalyzes the reductive methylation of 2'-deoxyuridine-5'-monophosphate (dUMP) to 2'-deoxythymidine-5'-monophosphate (dTMP) while utilizing 5,10-methylenetetrahydrofolate (mTHF) as the methyl donor and reductant in the reaction, yielding dihydrofolate (DHF) as a by-product. This enzymatic reaction provides an intracellular de novo source of dTMP, an essential precursor for DNA biosynthesis. The polypeptide is Thymidylate synthase (Bacillus atrophaeus).